Consider the following 68-residue polypeptide: ATP synthase F(0) complex subunit 8 (68 aa).

The chain crosses the membrane as a helical span at residues 8 to 24 (VWPTIITSMLLTLFLLM). N6-acetyllysine; alternate is present on Lys54. Position 54 is an N6-succinyllysine; alternate (Lys54). The residue at position 57 (Lys57) is an N6-acetyllysine.

Belongs to the ATPase protein 8 family. Component of the ATP synthase complex composed at least of ATP5F1A/subunit alpha, ATP5F1B/subunit beta, ATP5MC1/subunit c (homooctomer), MT-ATP6/subunit a, MT-ATP8/subunit 8, ATP5ME/subunit e, ATP5MF/subunit f, ATP5MG/subunit g, ATP5MK/subunit k, ATP5MJ/subunit j, ATP5F1C/subunit gamma, ATP5F1D/subunit delta, ATP5F1E/subunit epsilon, ATP5PF/subunit F6, ATP5PB/subunit b, ATP5PD/subunit d, ATP5PO/subunit OSCP. ATP synthase complex consists of a soluble F(1) head domain (subunits alpha(3) and beta(3)) - the catalytic core - and a membrane F(0) domain - the membrane proton channel (subunits c, a, 8, e, f, g, k and j). These two domains are linked by a central stalk (subunits gamma, delta, and epsilon) rotating inside the F1 region and a stationary peripheral stalk (subunits F6, b, d, and OSCP). Interacts with PRICKLE3.

Its subcellular location is the mitochondrion membrane. Subunit 8, of the mitochondrial membrane ATP synthase complex (F(1)F(0) ATP synthase or Complex V) that produces ATP from ADP in the presence of a proton gradient across the membrane which is generated by electron transport complexes of the respiratory chain. ATP synthase complex consist of a soluble F(1) head domain - the catalytic core - and a membrane F(1) domain - the membrane proton channel. These two domains are linked by a central stalk rotating inside the F(1) region and a stationary peripheral stalk. During catalysis, ATP synthesis in the catalytic domain of F(1) is coupled via a rotary mechanism of the central stalk subunits to proton translocation. In vivo, can only synthesize ATP although its ATP hydrolase activity can be activated artificially in vitro. Part of the complex F(0) domain. This is ATP synthase F(0) complex subunit 8 from Symphalangus syndactylus (Siamang).